Consider the following 310-residue polypeptide: Protein translocase subunit SecF (310 aa).

Transmembrane regions (helical) follow at residues F20 to Y42, I140 to V160, W164 to F184, L194 to I214, I246 to A266, and V272 to I292.

This sequence belongs to the SecD/SecF family. SecF subfamily. In terms of assembly, forms a complex with SecD. Part of the essential Sec protein translocation apparatus which comprises SecA, SecYEG and auxiliary proteins SecDF-YajC and YidC.

It is found in the cell inner membrane. In terms of biological role, part of the Sec protein translocase complex. Interacts with the SecYEG preprotein conducting channel. SecDF uses the proton motive force (PMF) to complete protein translocation after the ATP-dependent function of SecA. The sequence is that of Protein translocase subunit SecF from Rickettsia canadensis (strain McKiel).